The primary structure comprises 100 residues: Integration host factor subunit alpha (100 aa).

The segment at 53-72 (FDLRDKRQRPGRNPKTGEEI) is disordered.

Belongs to the bacterial histone-like protein family. In terms of assembly, heterodimer of an alpha and a beta chain.

Functionally, this protein is one of the two subunits of integration host factor, a specific DNA-binding protein that functions in genetic recombination as well as in transcriptional and translational control. The chain is Integration host factor subunit alpha from Stutzerimonas stutzeri (strain A1501) (Pseudomonas stutzeri).